Consider the following 261-residue polypeptide: uncharacterized protein (261 aa).

Residues 1-22 (MKYYGKCISYISILILTFFIGG) form the signal peptide. A lipid anchor (N-palmitoyl cysteine) is attached at C23. C23 carries S-diacylglycerol cysteine lipidation.

Belongs to the staphylococcal tandem lipoprotein family.

The protein resides in the cell membrane. This is an uncharacterized protein from Staphylococcus epidermidis (strain ATCC 12228 / FDA PCI 1200).